We begin with the raw amino-acid sequence, 141 residues long: Large ribosomal subunit protein uL11 (141 aa).

Belongs to the universal ribosomal protein uL11 family. In terms of assembly, part of the ribosomal stalk of the 50S ribosomal subunit. Interacts with L10 and the large rRNA to form the base of the stalk. L10 forms an elongated spine to which L12 dimers bind in a sequential fashion forming a multimeric L10(L12)X complex. In terms of processing, one or more lysine residues are methylated.

In terms of biological role, forms part of the ribosomal stalk which helps the ribosome interact with GTP-bound translation factors. The chain is Large ribosomal subunit protein uL11 from Clostridioides difficile (strain 630) (Peptoclostridium difficile).